We begin with the raw amino-acid sequence, 61 residues long: Small ribosomal subunit protein uS14B (61 aa).

4 residues coordinate Zn(2+): C24, C27, C40, and C43.

It belongs to the universal ribosomal protein uS14 family. Zinc-binding uS14 subfamily. Part of the 30S ribosomal subunit. Contacts proteins S3 and S10. Zn(2+) serves as cofactor.

Its function is as follows. Binds 16S rRNA, required for the assembly of 30S particles and may also be responsible for determining the conformation of the 16S rRNA at the A site. The sequence is that of Small ribosomal subunit protein uS14B from Oceanobacillus iheyensis (strain DSM 14371 / CIP 107618 / JCM 11309 / KCTC 3954 / HTE831).